The primary structure comprises 179 residues: Orotate phosphoribosyltransferase (179 aa).

Residues arginine 94, lysine 95, lysine 98, histidine 100, and 120–128 (EDTSTTGAS) each bind 5-phospho-alpha-D-ribose 1-diphosphate. Orotate contacts are provided by threonine 124 and arginine 152.

Belongs to the purine/pyrimidine phosphoribosyltransferase family. PyrE subfamily. As to quaternary structure, homodimer. The cofactor is Mg(2+).

It catalyses the reaction orotidine 5'-phosphate + diphosphate = orotate + 5-phospho-alpha-D-ribose 1-diphosphate. It functions in the pathway pyrimidine metabolism; UMP biosynthesis via de novo pathway; UMP from orotate: step 1/2. Its function is as follows. Catalyzes the transfer of a ribosyl phosphate group from 5-phosphoribose 1-diphosphate to orotate, leading to the formation of orotidine monophosphate (OMP). The sequence is that of Orotate phosphoribosyltransferase from Mycobacterium leprae (strain TN).